Consider the following 62-residue polypeptide: Small ribosomal subunit protein bS21 (62 aa).

Belongs to the bacterial ribosomal protein bS21 family.

This chain is Small ribosomal subunit protein bS21 (rpsU), found in Mycoplasma genitalium (strain ATCC 33530 / DSM 19775 / NCTC 10195 / G37) (Mycoplasmoides genitalium).